Here is a 208-residue protein sequence, read N- to C-terminus: Interleukin-6 (208 aa).

The signal sequence occupies residues 1 to 27; sequence MTFLSTSAFSPLAFSLGLLLVVATAFP. Cysteine 68 and cysteine 74 are disulfide-bonded. At serine 77 the chain carries Phosphoserine. Cysteine 97 and cysteine 107 are joined by a disulfide.

Belongs to the IL-6 superfamily. In terms of assembly, component of a hexamer of two molecules each of IL6, IL6R and IL6ST; first binds to IL6R to associate with the signaling subunit IL6ST. Interacts with IL6R (via the N-terminal ectodomain); this interaction may be affected by IL6R-binding with SORL1, hence decreasing IL6 cis signaling. Interacts with SORL1 (via the N-terminal ectodomain); this interaction leads to IL6 internalization and lysosomal degradation. May form a trimeric complex with the soluble SORL1 ectodomain and soluble IL6R receptor; this interaction might stabilize circulating IL6, hence promoting IL6 trans signaling.

Its subcellular location is the secreted. Its function is as follows. Cytokine with a wide variety of biological functions in immunity, tissue regeneration, and metabolism. Binds to IL6R, then the complex associates to the signaling subunit IL6ST/gp130 to trigger the intracellular IL6-signaling pathway. The interaction with the membrane-bound IL6R and IL6ST stimulates 'classic signaling', whereas the binding of IL6 and soluble IL6R to IL6ST stimulates 'trans-signaling'. Alternatively, 'cluster signaling' occurs when membrane-bound IL6:IL6R complexes on transmitter cells activate IL6ST receptors on neighboring receiver cells. Functionally, IL6 is a potent inducer of the acute phase response. Rapid production of IL6 contributes to host defense during infection and tissue injury, but excessive IL6 synthesis is involved in disease pathology. In the innate immune response, is synthesized by myeloid cells, such as macrophages and dendritic cells, upon recognition of pathogens through toll-like receptors (TLRs) at the site of infection or tissue injury. In the adaptive immune response, is required for the differentiation of B cells into immunoglobulin-secreting cells. Plays a major role in the differentiation of CD4(+) T cell subsets. Essential factor for the development of T follicular helper (Tfh) cells that are required for the induction of germinal-center formation. Required to drive naive CD4(+) T cells to the Th17 lineage. Also required for proliferation of myeloma cells and the survival of plasmablast cells. In terms of biological role, acts as an essential factor in bone homeostasis and on vessels directly or indirectly by induction of VEGF, resulting in increased angiogenesis activity and vascular permeability. Induces, through 'trans-signaling' and synergistically with IL1B and TNF, the production of VEGF. Involved in metabolic controls, is discharged into the bloodstream after muscle contraction increasing lipolysis and improving insulin resistance. 'Trans-signaling' in central nervous system also regulates energy and glucose homeostasis. Mediates, through GLP-1, crosstalk between insulin-sensitive tissues, intestinal L cells and pancreatic islets to adapt to changes in insulin demand. Also acts as a myokine. Plays a protective role during liver injury, being required for maintenance of tissue regeneration. Also has a pivotal role in iron metabolism by regulating HAMP/hepcidin expression upon inflammation or bacterial infection. Through activation of IL6ST-YAP-NOTCH pathway, induces inflammation-induced epithelial regeneration. This is Interleukin-6 (IL6) from Felis catus (Cat).